Consider the following 399-residue polypeptide: Elongation factor Tu (399 aa).

Residues Lys10 to Val207 form the tr-type G domain. Residues Gly19–Thr26 are G1. Gly19–Thr26 lines the GTP pocket. Thr26 contacts Mg(2+). A G2 region spans residues Gly60–Asn64. The tract at residues Asp81–Gly84 is G3. GTP contacts are provided by residues Asp81 to His85 and Asn136 to Asp139. The G4 stretch occupies residues Asn136–Asp139. Residues Ser174–Leu176 form a G5 region.

Belongs to the TRAFAC class translation factor GTPase superfamily. Classic translation factor GTPase family. EF-Tu/EF-1A subfamily. In terms of assembly, monomer.

The protein resides in the cytoplasm. The enzyme catalyses GTP + H2O = GDP + phosphate + H(+). GTP hydrolase that promotes the GTP-dependent binding of aminoacyl-tRNA to the A-site of ribosomes during protein biosynthesis. This Pseudothermotoga lettingae (strain ATCC BAA-301 / DSM 14385 / NBRC 107922 / TMO) (Thermotoga lettingae) protein is Elongation factor Tu.